A 695-amino-acid chain; its full sequence is Glycine--tRNA ligase beta subunit (695 aa).

This sequence belongs to the class-II aminoacyl-tRNA synthetase family. Tetramer of two alpha and two beta subunits.

It localises to the cytoplasm. The catalysed reaction is tRNA(Gly) + glycine + ATP = glycyl-tRNA(Gly) + AMP + diphosphate. The sequence is that of Glycine--tRNA ligase beta subunit from Lawsonia intracellularis (strain PHE/MN1-00).